The following is a 437-amino-acid chain: Trigger factor (437 aa).

A PPIase FKBP-type domain is found at 163–248; sequence DDRVTVDFEG…VKKIEASHLP (86 aa).

The protein belongs to the FKBP-type PPIase family. Tig subfamily.

Its subcellular location is the cytoplasm. It carries out the reaction [protein]-peptidylproline (omega=180) = [protein]-peptidylproline (omega=0). Its function is as follows. Involved in protein export. Acts as a chaperone by maintaining the newly synthesized protein in an open conformation. Functions as a peptidyl-prolyl cis-trans isomerase. This chain is Trigger factor, found in Variovorax paradoxus (strain S110).